The chain runs to 907 residues: Translation initiation factor IF-2 (907 aa).

The disordered stretch occupies residues 1 to 305 (MSEGNDQDQG…SLASVRRQRE (305 aa)). A compositionally biased stretch (gly residues) spans 62–80 (SGSGSSGGGRAGGRGGSGG). Basic and acidic residues-rich tracts occupy residues 93–114 (RVLEEQRAEAVRREQERREQEK) and 122–158 (EEARRRDEEARRAAEDEVREKEEAAARAREEEAERRA). Over residues 211–230 (PARPVTPSRPATPAATPQAP) the composition is skewed to low complexity. Basic and acidic residues-rich tracts occupy residues 240 to 249 (RVGEAEDDRR) and 271 to 280 (KGGDSRRSGR). The 171-residue stretch at 406–576 (PRPPVVTVMG…LLQAEMLDLR (171 aa)) folds into the tr-type G domain. Residues 415 to 422 (GHVDHGKT) form a G1 region. Residue 415 to 422 (GHVDHGKT) coordinates GTP. The segment at 440–444 (GITQH) is G2. Residues 462–465 (DTPG) form a G3 region. GTP is bound by residues 462–466 (DTPGH) and 516–519 (NKCD). The interval 516–519 (NKCD) is G4. Residues 552–554 (SAL) are G5.

This sequence belongs to the TRAFAC class translation factor GTPase superfamily. Classic translation factor GTPase family. IF-2 subfamily.

Its subcellular location is the cytoplasm. Functionally, one of the essential components for the initiation of protein synthesis. Protects formylmethionyl-tRNA from spontaneous hydrolysis and promotes its binding to the 30S ribosomal subunits. Also involved in the hydrolysis of GTP during the formation of the 70S ribosomal complex. The protein is Translation initiation factor IF-2 of Gluconacetobacter diazotrophicus (strain ATCC 49037 / DSM 5601 / CCUG 37298 / CIP 103539 / LMG 7603 / PAl5).